The sequence spans 332 residues: Junctional sarcoplasmic reticulum protein 1 (332 aa).

Residues 1–80 (MTTRGLEDLD…EKELAGKEST (80 aa)) form a mediates interaction with CACNA1S region. Disordered regions lie at residues 1 to 125 (MTTR…PWGD) and 159 to 332 (APHP…KGRD). At Thr-51 the chain carries Phosphothreonine. The segment covering 66–76 (GLKKMEKELAG) has biased composition (basic and acidic residues). Pro residues-rich tracts occupy residues 98 to 116 (QAPP…PPRT) and 177 to 197 (APKP…PGPP). Residues 221–232 (GGSISEASGEES) show a composition bias toward low complexity. Phosphoserine is present on residues Ser-223 and Ser-228. 2 stretches are compositionally biased toward basic and acidic residues: residues 239–256 (GSQE…EKLK) and 283–307 (RRWE…EHGK).

As to quaternary structure, interacts with CACNA1S, CACNB1 and calsequestrin. Specifically expressed in skeletal muscle. Detected in skeletal muscle and tongue (at protein level).

Its subcellular location is the sarcoplasmic reticulum membrane. It localises to the endoplasmic reticulum membrane. Functionally, involved in skeletal muscle excitation/contraction coupling (EC), probably acting as a regulator of the voltage-sensitive calcium channel CACNA1S. EC is a physiological process whereby an electrical signal (depolarization of the plasma membrane) is converted into a chemical signal, a calcium gradient, by the opening of ryanodine receptor calcium release channels. May regulate CACNA1S membrane targeting and activity. The polypeptide is Junctional sarcoplasmic reticulum protein 1 (Jsrp1) (Mus musculus (Mouse)).